The primary structure comprises 463 residues: RuvB-like 2 (463 aa).

N-acetylalanine is present on Ala-2. Lys-9 is covalently cross-linked (Glycyl lysine isopeptide (Lys-Gly) (interchain with G-Cter in SUMO2)). ATP is bound at residue 77 to 84 (GQPGTGKT). Ser-437 bears the Phosphoserine mark. Residues Lys-444 and Lys-456 each participate in a glycyl lysine isopeptide (Lys-Gly) (interchain with G-Cter in SUMO2) cross-link.

The protein belongs to the RuvB family. Forms homohexameric rings. Can form a dodecamer with RUVBL1 made of two stacked hexameric rings; however, even though RUVBL1 and RUVBL2 are present in equimolar ratio, the oligomeric status of each hexamer is not known. Oligomerization may regulate binding to nucleic acids and conversely, binding to nucleic acids may affect the dodecameric assembly. Interaction of the complex with DHX34 results in conformational changes of the N-terminus of the RUVBL2 subunits, resulting in loss of nucleotide binding ability and ATP hydrolysis of the complex. Interacts with the transcriptional activation domain of MYC. Interacts with ATF2. Component of the RNA polymerase II holoenzyme complex. May also act to bridge the LEF1/TCF1-CTNNB1 complex and TBP. Component of the NuA4 histone acetyltransferase complex which contains the catalytic subunit KAT5/TIP60 and the subunits EP400, TRRAP/PAF400, BRD8/SMAP, EPC1, DMAP1/DNMAP1, RUVBL1/TIP49, RUVBL2, ING3, actin, ACTL6A/BAF53A, MORF4L1/MRG15, MORF4L2/MRGX, MRGBP, YEATS4/GAS41, VPS72/YL1 and MEAF6. The NuA4 complex interacts with MYC and the adenovirus E1A protein. RUVBL2 interacts with EP400. Component of a NuA4-related complex which contains EP400, TRRAP/PAF400, SRCAP, BRD8/SMAP, EPC1, DMAP1/DNMAP1, RUVBL1/TIP49, RUVBL2, actin, ACTL6A/BAF53A, VPS72 and YEATS4/GAS41. Interacts with NPAT. Component of the chromatin-remodeling INO80 complex; specifically part of a complex module associated with the helicase ATP-binding and the helicase C-terminal domain of INO80. Component of some MLL1/MLL complex, at least composed of the core components KMT2A/MLL1, ASH2L, HCFC1/HCF1, WDR5 and RBBP5, as well as the facultative components BACC1, CHD8, E2F6, HSP70, INO80C, KANSL1, LAS1L, MAX, MCRS1, MGA, MYST1/MOF, PELP1, PHF20, PRP31, RING2, RUVB1/TIP49A, RUVB2/TIP49B, SENP3, TAF1, TAF4, TAF6, TAF7, TAF9 and TEX10. Interacts with IGHMBP2. Interacts with TELO2. Interacts with HINT1. Component of a SWR1-like complex. Component of the R2TP complex composed at least of RUVBL1, RUVBL2, RPAP3 and PIHD1. Component of the PAQosome complex which is responsible for the biogenesis of several protein complexes and which consists of R2TP complex members RUVBL1, RUVBL2, RPAP3 and PIH1D1, URI complex members PFDN2, PFDN6, PDRG1, UXT and URI1 as well as ASDURF, POLR2E and DNAAF10/WDR92. Interacts with ITFG1. Interacts with ZMYND10. Interacts with WAC; WAC positively regulates MTOR activity by promoting the assembly of the TTT complex composed of TELO2, TTI1 and TTI2 and the RUVBL complex composed of RUVBL1 and RUVBL2 into the TTT-RUVBL complex which leads to the dimerization of the mTORC1 complex and its subsequent activation. Forms a complex with APPL1 and APPL2. Interacts with ZNHIT2 (via HIT-type zinc finger) in the presence of ATP or ADP; shows a stronger interaction in the presence of ADP. The RUVBL1/RUVBL2 complex interacts with ZNHIT1 (via HIT-type zinc finger), ZNHIT3 (via HIT-type zinc finger), ZNHIT6 (via HIT-type zinc finger) and DDX59/ZNHIT5 (via HIT-type zinc finger) in the presence of ADP. Interacts with NOPCHAP1; the interaction is direct and disrupted upon ATP binding. Interacts with SMG1.

It localises to the nucleus matrix. It is found in the nucleus. The protein resides in the nucleoplasm. Its subcellular location is the cytoplasm. The protein localises to the membrane. It localises to the dynein axonemal particle. The enzyme catalyses ATP + H2O = ADP + phosphate + H(+). Functionally, possesses single-stranded DNA-stimulated ATPase and ATP-dependent DNA helicase (5' to 3') activity; hexamerization is thought to be critical for ATP hydrolysis and adjacent subunits in the ring-like structure contribute to the ATPase activity. Component of the NuA4 histone acetyltransferase complex which is involved in transcriptional activation of select genes principally by acetylation of nucleosomal histones H4 and H2A. This modification may both alter nucleosome-DNA interactions and promote interaction of the modified histones with other proteins which positively regulate transcription. This complex may be required for the activation of transcriptional programs associated with oncogene and proto-oncogene mediated growth induction, tumor suppressor mediated growth arrest and replicative senescence, apoptosis, and DNA repair. The NuA4 complex ATPase and helicase activities seem to be, at least in part, contributed by the association of RUVBL1 and RUVBL2 with EP400. NuA4 may also play a direct role in DNA repair when recruited to sites of DNA damage. Component of a SWR1-like complex that specifically mediates the removal of histone H2A.Z/H2AZ1 from the nucleosome. Proposed core component of the chromatin remodeling INO80 complex which exhibits DNA- and nucleosome-activated ATPase activity and catalyzes ATP-dependent nucleosome sliding. Plays an essential role in oncogenic transformation by MYC and also modulates transcriptional activation by the LEF1/TCF1-CTNNB1 complex. May also inhibit the transcriptional activity of ATF2. Involved in the endoplasmic reticulum (ER)-associated degradation (ERAD) pathway where it negatively regulates expression of ER stress response genes. May play a role in regulating the composition of the U5 snRNP complex. This Mus musculus (Mouse) protein is RuvB-like 2 (Ruvbl2).